A 263-amino-acid polypeptide reads, in one-letter code: Uroplakin-3b-like protein 1 (263 aa).

The signal sequence occupies residues 1-33; that stretch reads MDNSWRLGPAIGLSAGQSQLLVSLLLLLTRVQP. Residues 34–204 are Extracellular-facing; it reads GTDVAAPEHI…PGPQSPGTVV (171 aa). 3 N-linked (GlcNAc...) asparagine glycosylation sites follow: N51, N76, and N91. Residues 205–225 form a helical membrane-spanning segment; it reads IIAILSILLAVLLTVLLAVLI. Residues 226-263 lie on the Cytoplasmic side of the membrane; sequence YTCFNSCRSTSLSGPEEAGSVRRYTTHLAFSTPAEGAS.

It belongs to the uroplakin-3 family.

It is found in the membrane. The protein is Uroplakin-3b-like protein 1 of Homo sapiens (Human).